The chain runs to 260 residues: Glucosamine-6-phosphate deaminase (260 aa).

Asp-67 acts as the Proton acceptor; for enolization step in catalysis. Catalysis depends on Asp-136, which acts as the For ring-opening step. The Proton acceptor; for ring-opening step role is filled by His-138. Glu-143 functions as the For ring-opening step in the catalytic mechanism.

This sequence belongs to the glucosamine/galactosamine-6-phosphate isomerase family. NagB subfamily.

It carries out the reaction alpha-D-glucosamine 6-phosphate + H2O = beta-D-fructose 6-phosphate + NH4(+). Its pathway is amino-sugar metabolism; N-acetylneuraminate degradation; D-fructose 6-phosphate from N-acetylneuraminate: step 5/5. Catalyzes the reversible isomerization-deamination of glucosamine 6-phosphate (GlcN6P) to form fructose 6-phosphate (Fru6P) and ammonium ion. This is Glucosamine-6-phosphate deaminase from Arthrobacter sp. (strain FB24).